Consider the following 104-residue polypeptide: MTRPWRLLTDGLEVRVRATPRGGRDAVEGIETRADGLPVLKVRVRAAPEDGAANAAIRAVLAEALGCPARAVTLAAGATARVKLFRVAGDGQALAARIGALLGP.

The protein belongs to the UPF0235 family.

The chain is UPF0235 protein M446_3939 from Methylobacterium sp. (strain 4-46).